The following is a 112-amino-acid chain: 2Fe-2S ferredoxin (112 aa).

The region spanning 5 to 107 (IKVTFIINDG…GIKVRIPATT (103 aa)) is the 2Fe-2S ferredoxin-type domain. [2Fe-2S] cluster-binding residues include Cys-42, Cys-48, Cys-51, and Cys-88.

This sequence belongs to the adrenodoxin/putidaredoxin family. [2Fe-2S] cluster serves as cofactor.

In terms of biological role, ferredoxin are iron-sulfur proteins that transfer electrons in a wide variety of metabolic reactions. The sequence is that of 2Fe-2S ferredoxin (fdxB) from Rickettsia conorii (strain ATCC VR-613 / Malish 7).